Here is a 62-residue protein sequence, read N- to C-terminus: Protein CYSTEINE-RICH TRANSMEMBRANE MODULE 2 (62 aa).

A run of 2 helical transmembrane segments spans residues 23–39 and 33–53; these read VAVAATRSASVVAAAFD and VVAAAFDFYICIIISTLLSLI.

Belongs to the CYSTM1 family. As to quaternary structure, heterodimers. Binds weakly to CYSTM7 and WIH1/CYSTM13. Mostly expressed in stems, siliques, leaves and flowers and, to a lower extent, in roots.

It localises to the cell membrane. Its subcellular location is the nucleus. The protein resides in the secreted. The protein localises to the cell wall. Functionally, involved in resistance to abiotic stress. Its function is as follows. Confers resistance to heavy metal ions (e.g. cadmium (CdCl(2)) and copper (CuCl(2))) by chelating them at the plasma membrane of root cells, thus stopping their entry and reducing their accumulation. The polypeptide is Protein CYSTEINE-RICH TRANSMEMBRANE MODULE 2 (Arabidopsis thaliana (Mouse-ear cress)).